We begin with the raw amino-acid sequence, 1296 residues long: Histone-lysine N-methyltransferase EHMT1 (1296 aa).

Disordered regions lie at residues 1–111 (MAAA…NHVT) and 170–200 (PQTPTTAPTVPGEGSADTEDRKPTASGTDVR). Alanine 2 is modified (N-acetylalanine). The span at 14 to 31 (QETKQDCCMKTELLREDT) shows a compositional bias: basic and acidic residues. Residue lysine 23 forms a Glycyl lysine isopeptide (Lys-Gly) (interchain with G-Cter in SUMO1); alternate linkage. A Glycyl lysine isopeptide (Lys-Gly) (interchain with G-Cter in SUMO2); alternate cross-link involves residue lysine 23. Positions 77–89 (NTRASPQEGTNRV) are enriched in polar residues. Residues 97-106 (VSERDTEVGK) are compositionally biased toward basic and acidic residues. Glycyl lysine isopeptide (Lys-Gly) (interchain with G-Cter in SUMO2) cross-links involve residues lysine 191, lysine 229, lysine 232, lysine 315, and lysine 325. The interval 341–470 (SLEMDSEDED…SSPGSMEQAA (130 aa)) is disordered. Residues 342 to 360 (LEMDSEDEDSDELEDDEDH) are compositionally biased toward acidic residues. Positions 371 to 391 (EDSRTSKESMSETDRAAKMDG) are enriched in basic and acidic residues. Residues 392–414 (DSEEEQESPDTGEDEDGGDESDL) are compositionally biased toward acidic residues. A Glycyl lysine isopeptide (Lys-Gly) (interchain with G-Cter in SUMO2) cross-link involves residue lysine 430. The residue at position 433 (serine 433) is a Phosphoserine. Basic residues predominate over residues 438-450 (PARKRRRRSRKKP). Serine 481 is subject to Phosphoserine. Glycyl lysine isopeptide (Lys-Gly) (interchain with G-Cter in SUMO2) cross-links involve residues lysine 559, lysine 644, lysine 659, and lysine 729. Residues 653–714 (LAPGQEKSLA…PTSGLSQGPG (62 aa)) form a disordered region. ANK repeat units follow at residues 735–764 (FHPKQLYFSARQGELQKVLLMLVDGIDPNF), 770–799 (SKRSPLHAAAEAGHVDICHMLVQAGANIDT), 803–832 (DQRTPLMEAAENNHLDAVKYLIKAGAQVDP), 836–866 (EGSTCLHLAAKKGHYDVVQYLLSNGQMDVNC), 870–899 (GGWTPMIWATEYKHVELVKLLLSKGSDINI), 903–932 (EENICLHWAAFSGCVDIAEILLAAKCDLHA), 936–965 (HGDSPLHIAARENRYDCVVLFLSRDSDVTL), and 969–1002 (EGETPLQCASLSSQVWSALQMSKALRDSAPDKPV). The histone H3K9me binding stretch occupies residues 903–905 (EEN). Serine 1046 is modified (phosphoserine). Residues 1058 to 1121 (QYCVCVDDCS…NCRNRVVQNG (64 aa)) form the Pre-SET domain. 9 residues coordinate Zn(2+): cysteine 1060, cysteine 1062, cysteine 1066, cysteine 1071, cysteine 1073, cysteine 1103, cysteine 1107, cysteine 1109, and cysteine 1113. The region spanning 1124–1241 (ARLQLYRTQD…AGEQLGFDYG (118 aa)) is the SET domain. S-adenosyl-L-methionine contacts are provided by residues 1134–1136 (MGW), tyrosine 1171, and 1198–1199 (NH). The interval 1160–1179 (DSEADVREEDSYLFDLDNKD) is interaction with histone H3. Cysteine 1201 is a binding site for Zn(2+). Residues 1240 to 1243 (YGER) form an interaction with histone H3 region. Cysteine 1254 contributes to the Zn(2+) binding site. Arginine 1255 is an S-adenosyl-L-methionine binding site. Positions 1256 and 1261 each coordinate Zn(2+). The interval 1271 to 1296 (RQASAAQEPQENGLPDTSSAAAADPL) is disordered.

It belongs to the class V-like SAM-binding methyltransferase superfamily. Interacts with WIZ. Part of the E2F6.com-1 complex in G0 phase composed of E2F6, MGA, MAX, TFDP1, CBX3, BAT8, EHMT1, RING1, RNF2, MBLR, L3MBTL2 and YAF2. Interacts with MPHOSPH8. Interacts with CDYL. Interacts with REST only in the presence of CDYL. Part of a complex containing at least CDYL, REST, WIZ, SETB1, EHMT1 and EHMT2. Heterodimer; heterodimerizes with EHMT2. Interacts (via ANK repeats) with RELA (when monomethylated at 'Lys-310'). Interacts with Baz2b. In terms of tissue distribution, ubiquitous.

The protein localises to the nucleus. The protein resides in the chromosome. It carries out the reaction N(6)-methyl-L-lysyl(9)-[histone H3] + S-adenosyl-L-methionine = N(6),N(6)-dimethyl-L-lysyl(9)-[histone H3] + S-adenosyl-L-homocysteine + H(+). It catalyses the reaction L-lysyl(9)-[histone H3] + S-adenosyl-L-methionine = N(6)-methyl-L-lysyl(9)-[histone H3] + S-adenosyl-L-homocysteine + H(+). Methyltransferase activity is inhibited by BIX-01294. Efficiently inhibited by compound E72, a BIX-01294 derivative in which the diazepane ring and the benzyl are replaced with a 3-dimethylaminopropyl and a 5-aminopentyl group at sites B and C, respectively. Its function is as follows. Histone methyltransferase that specifically mono- and dimethylates 'Lys-9' of histone H3 (H3K9me1 and H3K9me2, respectively) in euchromatin. H3K9me represents a specific tag for epigenetic transcriptional repression by recruiting HP1 proteins to methylated histones. Also weakly methylates 'Lys-27' of histone H3 (H3K27me). Also required for DNA methylation, the histone methyltransferase activity is not required for DNA methylation, suggesting that these 2 activities function independently. Probably targeted to histone H3 by different DNA-binding proteins like E2F6, MGA, MAX and/or DP1. During G0 phase, it probably contributes to silencing of MYC- and E2F-responsive genes, suggesting a role in G0/G1 transition in cell cycle. In addition to the histone methyltransferase activity, also methylates non-histone proteins: mediates dimethylation of 'Lys-373' of p53/TP53. Represses the expression of mitochondrial function-related genes, perhaps by occupying their promoter regions, working in concert with probable chromatin reader Baz2b. The chain is Histone-lysine N-methyltransferase EHMT1 (Ehmt1) from Mus musculus (Mouse).